A 335-amino-acid chain; its full sequence is Deoxyhypusine hydroxylase (335 aa).

HEAT-like PBS-type repeat units lie at residues 74–100 (LKHE…VLED), 107–133 (CRHE…LRDD), 203–233 (KRYR…LAEG), 241–267 (FRHE…TLSD), and 274–301 (VRHE…FVND). 4 residues coordinate Fe cation: histidine 76, glutamate 77, histidine 109, and glutamate 110. The Fe cation site is built by histidine 243, glutamate 244, histidine 276, and glutamate 277.

It belongs to the deoxyhypusine hydroxylase family. It depends on Fe(2+) as a cofactor.

The protein localises to the cytoplasm. It localises to the nucleus. It catalyses the reaction [eIF5A protein]-deoxyhypusine + AH2 + O2 = [eIF5A protein]-hypusine + A + H2O. The protein operates within protein modification; eIF5A hypusination. Functionally, catalyzes the hydroxylation of the N(6)-(4-aminobutyl)-L-lysine intermediate to form hypusine, an essential post-translational modification only found in mature eIF-5A factor. The polypeptide is Deoxyhypusine hydroxylase (Coccidioides immitis (strain RS) (Valley fever fungus)).